The following is a 342-amino-acid chain: Probable dual-specificity RNA methyltransferase RlmN (342 aa).

The Proton acceptor role is filled by E91. The Radical SAM core domain maps to 97-327; it reads YKHGNSICVS…TTIRREMGAD (231 aa). A disulfide bond links C104 and C332. The [4Fe-4S] cluster site is built by C111, C115, and C118. S-adenosyl-L-methionine-binding positions include 158-159, S190, 213-215, and N289; these read GE and SLH. The active-site S-methylcysteine intermediate is the C332.

The protein belongs to the radical SAM superfamily. RlmN family. [4Fe-4S] cluster is required as a cofactor.

It is found in the cytoplasm. It catalyses the reaction adenosine(2503) in 23S rRNA + 2 reduced [2Fe-2S]-[ferredoxin] + 2 S-adenosyl-L-methionine = 2-methyladenosine(2503) in 23S rRNA + 5'-deoxyadenosine + L-methionine + 2 oxidized [2Fe-2S]-[ferredoxin] + S-adenosyl-L-homocysteine. The catalysed reaction is adenosine(37) in tRNA + 2 reduced [2Fe-2S]-[ferredoxin] + 2 S-adenosyl-L-methionine = 2-methyladenosine(37) in tRNA + 5'-deoxyadenosine + L-methionine + 2 oxidized [2Fe-2S]-[ferredoxin] + S-adenosyl-L-homocysteine. In terms of biological role, specifically methylates position 2 of adenine 2503 in 23S rRNA and position 2 of adenine 37 in tRNAs. The sequence is that of Probable dual-specificity RNA methyltransferase RlmN from Clostridium botulinum (strain Okra / Type B1).